A 325-amino-acid chain; its full sequence is 4-hydroxy-3-methylbut-2-enyl diphosphate reductase (325 aa).

[4Fe-4S] cluster is bound at residue cysteine 13. Residues histidine 42 and histidine 76 each contribute to the (2E)-4-hydroxy-3-methylbut-2-enyl diphosphate site. Histidine 42 and histidine 76 together coordinate dimethylallyl diphosphate. Residues histidine 42 and histidine 76 each contribute to the isopentenyl diphosphate site. A [4Fe-4S] cluster-binding site is contributed by cysteine 98. Histidine 126 serves as a coordination point for (2E)-4-hydroxy-3-methylbut-2-enyl diphosphate. Histidine 126 is a binding site for dimethylallyl diphosphate. Histidine 126 serves as a coordination point for isopentenyl diphosphate. Glutamate 128 serves as the catalytic Proton donor. Threonine 169 serves as a coordination point for (2E)-4-hydroxy-3-methylbut-2-enyl diphosphate. Cysteine 230 serves as a coordination point for [4Fe-4S] cluster. 4 residues coordinate (2E)-4-hydroxy-3-methylbut-2-enyl diphosphate: serine 258, serine 259, asparagine 260, and serine 306. Residues serine 258, serine 259, asparagine 260, and serine 306 each coordinate dimethylallyl diphosphate. Serine 258, serine 259, asparagine 260, and serine 306 together coordinate isopentenyl diphosphate.

This sequence belongs to the IspH family. Requires [4Fe-4S] cluster as cofactor.

The catalysed reaction is isopentenyl diphosphate + 2 oxidized [2Fe-2S]-[ferredoxin] + H2O = (2E)-4-hydroxy-3-methylbut-2-enyl diphosphate + 2 reduced [2Fe-2S]-[ferredoxin] + 2 H(+). It carries out the reaction dimethylallyl diphosphate + 2 oxidized [2Fe-2S]-[ferredoxin] + H2O = (2E)-4-hydroxy-3-methylbut-2-enyl diphosphate + 2 reduced [2Fe-2S]-[ferredoxin] + 2 H(+). It participates in isoprenoid biosynthesis; dimethylallyl diphosphate biosynthesis; dimethylallyl diphosphate from (2E)-4-hydroxy-3-methylbutenyl diphosphate: step 1/1. It functions in the pathway isoprenoid biosynthesis; isopentenyl diphosphate biosynthesis via DXP pathway; isopentenyl diphosphate from 1-deoxy-D-xylulose 5-phosphate: step 6/6. Catalyzes the conversion of 1-hydroxy-2-methyl-2-(E)-butenyl 4-diphosphate (HMBPP) into a mixture of isopentenyl diphosphate (IPP) and dimethylallyl diphosphate (DMAPP). Acts in the terminal step of the DOXP/MEP pathway for isoprenoid precursor biosynthesis. The polypeptide is 4-hydroxy-3-methylbut-2-enyl diphosphate reductase (Prosthecochloris aestuarii (strain DSM 271 / SK 413)).